The following is a 133-amino-acid chain: MSAFIGSWKLCESQNFDEFLRELGVNFFIRKAASTSKPTITFDKFGDNGLKMKTETILKTTEQSFTFGEEFDETTIDGRQVKSTVTRDSDTQLTQVQKHDDGNTVIVRKIEGDMMVTTATFKNITSVRKYQRH.

It belongs to the calycin superfamily. Fatty-acid binding protein (FABP) family.

In Clonorchis sinensis (Chinese liver fluke), this protein is Fatty acid-binding protein.